Reading from the N-terminus, the 522-residue chain is Protein nucleotidyltransferase YdiU (522 aa).

Residues G101, G103, R104, K123, D135, G136, R193, and R200 each contribute to the ATP site. D270 acts as the Proton acceptor in catalysis. The Mg(2+) site is built by N271 and D280. D280 serves as a coordination point for ATP.

It belongs to the SELO family. Mg(2+) is required as a cofactor. It depends on Mn(2+) as a cofactor.

The enzyme catalyses L-seryl-[protein] + ATP = 3-O-(5'-adenylyl)-L-seryl-[protein] + diphosphate. The catalysed reaction is L-threonyl-[protein] + ATP = 3-O-(5'-adenylyl)-L-threonyl-[protein] + diphosphate. It catalyses the reaction L-tyrosyl-[protein] + ATP = O-(5'-adenylyl)-L-tyrosyl-[protein] + diphosphate. It carries out the reaction L-histidyl-[protein] + UTP = N(tele)-(5'-uridylyl)-L-histidyl-[protein] + diphosphate. The enzyme catalyses L-seryl-[protein] + UTP = O-(5'-uridylyl)-L-seryl-[protein] + diphosphate. The catalysed reaction is L-tyrosyl-[protein] + UTP = O-(5'-uridylyl)-L-tyrosyl-[protein] + diphosphate. Functionally, nucleotidyltransferase involved in the post-translational modification of proteins. It can catalyze the addition of adenosine monophosphate (AMP) or uridine monophosphate (UMP) to a protein, resulting in modifications known as AMPylation and UMPylation. The polypeptide is Protein nucleotidyltransferase YdiU (Flavobacterium johnsoniae (strain ATCC 17061 / DSM 2064 / JCM 8514 / BCRC 14874 / CCUG 350202 / NBRC 14942 / NCIMB 11054 / UW101) (Cytophaga johnsonae)).